Reading from the N-terminus, the 191-residue chain is Transmembrane protein 17B (191 aa).

4 helical membrane-spanning segments follow: residues Met50 to Leu70, Phe83 to Gly103, Leu115 to Phe135, and Gly147 to Leu167.

It belongs to the TMEM17 family. In terms of assembly, part of the tectonic-like complex (also named B9 complex).

It is found in the cell projection. Its subcellular location is the cilium membrane. Transmembrane component of the tectonic-like complex, a complex localized at the transition zone of primary cilia and acting as a barrier that prevents diffusion of transmembrane proteins between the cilia and plasma membranes. Required for ciliogenesis and sonic hedgehog/SHH signaling. The sequence is that of Transmembrane protein 17B (Tmem17b) from Danio rerio (Zebrafish).